A 121-amino-acid chain; its full sequence is Small ribosomal subunit protein uS13 (121 aa).

Residues 91-121 (HRKGLPMRGQRTRTNARTRKGPRKAGVALKK) are disordered.

The protein belongs to the universal ribosomal protein uS13 family. Part of the 30S ribosomal subunit. Forms a loose heterodimer with protein S19. Forms two bridges to the 50S subunit in the 70S ribosome.

Functionally, located at the top of the head of the 30S subunit, it contacts several helices of the 16S rRNA. In the 70S ribosome it contacts the 23S rRNA (bridge B1a) and protein L5 of the 50S subunit (bridge B1b), connecting the 2 subunits; these bridges are implicated in subunit movement. Contacts the tRNAs in the A and P-sites. The sequence is that of Small ribosomal subunit protein uS13 from Cupriavidus taiwanensis (strain DSM 17343 / BCRC 17206 / CCUG 44338 / CIP 107171 / LMG 19424 / R1) (Ralstonia taiwanensis (strain LMG 19424)).